A 222-amino-acid chain; its full sequence is Thiol:disulfide interchange protein DsbL (222 aa).

The signal sequence occupies residues 1-27 (MSAKWINSIFKSVVLTAALALPFTASA). Residues 28 to 221 (FTEGTDYMVL…MAQLVRELAT (194 aa)) enclose the Thioredoxin domain. Cys56 and Cys59 are oxidised to a cystine.

This sequence belongs to the thioredoxin family. DsbL subfamily. Interacts with DsbI.

It is found in the periplasm. In terms of biological role, involved in disulfide-bond formation. Acts by transferring its disulfide bond to other proteins. Part of a redox system composed of DsbI and DsbL that mediates formation of an essential disulfide bond in AssT. This Lelliottia amnigena (Enterobacter amnigenus) protein is Thiol:disulfide interchange protein DsbL.